The following is a 438-amino-acid chain: Gamma-glutamyl phosphate reductase (438 aa).

It belongs to the gamma-glutamyl phosphate reductase family.

It localises to the cytoplasm. It catalyses the reaction L-glutamate 5-semialdehyde + phosphate + NADP(+) = L-glutamyl 5-phosphate + NADPH + H(+). It functions in the pathway amino-acid biosynthesis; L-proline biosynthesis; L-glutamate 5-semialdehyde from L-glutamate: step 2/2. Functionally, catalyzes the NADPH-dependent reduction of L-glutamate 5-phosphate into L-glutamate 5-semialdehyde and phosphate. The product spontaneously undergoes cyclization to form 1-pyrroline-5-carboxylate. The chain is Gamma-glutamyl phosphate reductase from Natronomonas pharaonis (strain ATCC 35678 / DSM 2160 / CIP 103997 / JCM 8858 / NBRC 14720 / NCIMB 2260 / Gabara) (Halobacterium pharaonis).